A 391-amino-acid chain; its full sequence is Probable malate dehydrogenase 1 (391 aa).

68 to 74 (GAAGQIA) is an NAD(+) binding site. Residues R149 and R155 each coordinate substrate. NAD(+) contacts are provided by residues N162, Q169, and 186–188 (VGN). Residues N188 and R219 each coordinate substrate. H244 acts as the Proton acceptor in catalysis.

The protein belongs to the LDH/MDH superfamily. MDH type 2 family. Homodimer.

It catalyses the reaction (S)-malate + NAD(+) = oxaloacetate + NADH + H(+). Functionally, catalyzes the reversible oxidation of malate to oxaloacetate. The chain is Probable malate dehydrogenase 1 (mdhA) from Dictyostelium discoideum (Social amoeba).